Reading from the N-terminus, the 1154-residue chain is FERM domain-containing protein A (1154 aa).

5 disordered regions span residues 122–149 (NNNS…SSSS), 432–468 (NLSS…NHHN), 715–734 (NKNN…SSSS), 771–794 (SNSN…TSSS), and 961–980 (TNGS…NNGI). 2 FERM domains span residues 218 to 547 (PLHQ…PSIQ) and 666 to 1103 (REIV…QTKL). Gly residues predominate over residues 437–447 (GGSGNGSGSGN). The span at 448–463 (GSSSSSSNSSSGNNNN) shows a compositional bias: low complexity.

Key regulator of adhesion dynamics, it acts as an anti-adhesive. Plays a critical role in the regulation of cell-cell adhesion, multi-cellular development and, in particular, the formation of the organising center known as the tip. Required for turnover of paxillin-adhesion sites during cell migration. Plays a major role in normal cell shape, cell-substrate adhesion and actin cytoskeleton organization. The chain is FERM domain-containing protein A (frmA) from Dictyostelium discoideum (Social amoeba).